Reading from the N-terminus, the 410-residue chain is MTPDSSPSSVDDPLFESGHRIFANKDLLKIGHVPEADRIVGRDEEISKLAKRLNGAVHGYSPENVMIYGKTGTGKSLVSKHVCQRAQNAAQDGVEIGTAYIDCAEDNTETQAISSLAAKLNDESSTGISVPHTGLSTSKYYKLLWKTLDAQFDSVIIILDEIDLMNDDSVLMKLSRAEEAGKIDCSVGVIAISNKIQYVDNVNERVKSSFQHKELFFKPYDANQLREIMFNREDAFQDGVLSEDVIPLSAAFAAQEHGDARKAIDILRHAGEVAYEAGAELVTEEHVRQAQQHAEKDRFRELVNGAPTQAKAALLALTELSVNSNDDAFLTSRVYDQYEHICNHLDMDILSVRRFRDILKEQAFLGVVEIEKINKGSAGGIHLQNRLIEDSQVVRETILEDSRMQDWTRE.

Residues 73–77 (TGKSL), Tyr-220, and Arg-232 each bind ATP.

This sequence belongs to the CDC6/cdc18 family.

In terms of biological role, involved in regulation of DNA replication. The chain is ORC1-type DNA replication protein 4 (orc4) from Halobacterium salinarum (strain ATCC 700922 / JCM 11081 / NRC-1) (Halobacterium halobium).